A 364-amino-acid polypeptide reads, in one-letter code: tRNA N6-adenosine threonylcarbamoyltransferase (364 aa).

2 residues coordinate Fe cation: His118 and His122. Substrate contacts are provided by residues 140-144, Asp173, Gly186, and Asn288; that span reads LVSGG. Asp316 provides a ligand contact to Fe cation.

It belongs to the KAE1 / TsaD family. It depends on Fe(2+) as a cofactor.

It is found in the cytoplasm. The catalysed reaction is L-threonylcarbamoyladenylate + adenosine(37) in tRNA = N(6)-L-threonylcarbamoyladenosine(37) in tRNA + AMP + H(+). Its function is as follows. Required for the formation of a threonylcarbamoyl group on adenosine at position 37 (t(6)A37) in tRNAs that read codons beginning with adenine. Is involved in the transfer of the threonylcarbamoyl moiety of threonylcarbamoyl-AMP (TC-AMP) to the N6 group of A37, together with TsaE and TsaB. TsaD likely plays a direct catalytic role in this reaction. This is tRNA N6-adenosine threonylcarbamoyltransferase from Cereibacter sphaeroides (strain KD131 / KCTC 12085) (Rhodobacter sphaeroides).